Here is a 636-residue protein sequence, read N- to C-terminus: Sodium-dependent proline transporter (636 aa).

The Cytoplasmic portion of the chain corresponds to 1–45; the sequence is MKKLQGAHLRKPVTPDLLMTPSDQGDVDLDVDFAAHRGNWTGKLD. The residue at position 20 (T20) is a Phosphothreonine. S22 is subject to Phosphoserine. Helical transmembrane passes span 46 to 66, 74 to 93, and 117 to 137; these read FLLS…FPYR, AFLV…LFFL, and GAGA…NMII. At 138-214 the chain is on the extracellular side; sequence AYVLFYLFAS…QGIGSPGEIR (77 aa). An N-linked (GlcNAc...) asparagine glycan is attached at N182. 9 consecutive transmembrane segments (helical) span residues 215–233, 242–259, 295–312, 324–345, 378–397, 425–443, 459–479, 500–519, and 538–556; these read WNLC…LCIL, VVYF…MLLV, IFYS…FASY, FIVT…FSVL, LPLS…TLGL, VFSG…ILTT, SFGL…VYGI, ACWL…YSIV, and LGIL…GMLV. The Cytoplasmic segment spans residues 557 to 636; the sequence is AVLREEGSLW…EIAEEEESMM (80 aa). Phosphoserine occurs at positions 573 and 582. A Phosphothreonine modification is found at T588. The residue at position 591 (Y591) is a Phosphotyrosine. Phosphoserine occurs at positions 598 and 600.

It belongs to the sodium:neurotransmitter symporter (SNF) (TC 2.A.22) family. SLC6A7 subfamily. As to expression, brain specific (at protein level). Highly expressed in hippocampus, corpus striatum and temporal cortex. Also expressed in frontal cortex, occipital cortex and, at lower levels, in cerebellum and parietal cortex (at protein level).

The protein localises to the synaptic cell membrane. The enzyme catalyses L-proline(out) + chloride(out) + 2 Na(+)(out) = L-proline(in) + chloride(in) + 2 Na(+)(in). It catalyses the reaction L-pipecolate(out) + chloride(out) + 2 Na(+)(out) = L-pipecolate(in) + chloride(in) + 2 Na(+)(in). Functionally, brain specific sodium (and chloride)-dependent proline transporter. Terminates the action of proline by its high affinity sodium-dependent reuptake into presynaptic terminals. The chain is Sodium-dependent proline transporter from Homo sapiens (Human).